A 66-amino-acid chain; its full sequence is Phylloseptin-H7 (66 aa).

Residues 1 to 22 (MAFLKKSLFLVLFLGLVSLSIC) form the signal peptide. A propeptide spanning residues 23–44 (EEEKRETEEEENDQEEDDKSEE) is cleaved from the precursor. Residues 25–44 (EKRETEEEENDQEEDDKSEE) form a disordered region. The span at 30 to 41 (EEEENDQEEDDK) shows a compositional bias: acidic residues. Position 65 is a leucine amide (Leu-65).

Expressed by the skin glands.

The protein localises to the secreted. In terms of biological role, has antimicrobial activity. The protein is Phylloseptin-H7 of Pithecopus hypochondrialis (Orange-legged leaf frog).